The following is a 107-amino-acid chain: MEDILKLLFETIEERKKNPLSESYTNYLFSKGEDKILKKIGEECTEVIIASKNNDKEEIVKEMVDVFYHCFVLLAEKNIPLEDVMQEVKERNGKLSRVGDRREIDTL.

Belongs to the PRA-PH family.

It is found in the cytoplasm. It carries out the reaction 1-(5-phospho-beta-D-ribosyl)-ATP + H2O = 1-(5-phospho-beta-D-ribosyl)-5'-AMP + diphosphate + H(+). Its pathway is amino-acid biosynthesis; L-histidine biosynthesis; L-histidine from 5-phospho-alpha-D-ribose 1-diphosphate: step 2/9. The sequence is that of Phosphoribosyl-ATP pyrophosphatase from Bacillus mycoides (strain KBAB4) (Bacillus weihenstephanensis).